A 662-amino-acid chain; its full sequence is Probable lysophospholipase 3 (662 aa).

Residues 1–19 form the signal peptide; the sequence is MLFNCFGILALLQILPALA. Residues Asn74, Asn127, Asn162, Asn196, Asn266, Asn274, Asn303, Asn376, Asn406, Asn411, Asn483, Asn518, Asn523, Asn547, Asn556, Asn574, Asn596, and Asn613 are each glycosylated (N-linked (GlcNAc...) asparagine). One can recognise a PLA2c domain in the interval 76–617; the sequence is TCPSDYMLRP…EQYCWNGTTV (542 aa).

The protein belongs to the lysophospholipase family.

The protein resides in the secreted. It catalyses the reaction a 1-acyl-sn-glycero-3-phosphocholine + H2O = sn-glycerol 3-phosphocholine + a fatty acid + H(+). Functionally, catalyzes the release of fatty acids from lysophospholipids. In Schizosaccharomyces pombe (strain 972 / ATCC 24843) (Fission yeast), this protein is Probable lysophospholipase 3 (plb3).